Consider the following 283-residue polypeptide: 2-dehydro-3-deoxyphosphooctonate aldolase (283 aa).

The protein belongs to the KdsA family.

It localises to the cytoplasm. It catalyses the reaction D-arabinose 5-phosphate + phosphoenolpyruvate + H2O = 3-deoxy-alpha-D-manno-2-octulosonate-8-phosphate + phosphate. The protein operates within carbohydrate biosynthesis; 3-deoxy-D-manno-octulosonate biosynthesis; 3-deoxy-D-manno-octulosonate from D-ribulose 5-phosphate: step 2/3. It functions in the pathway bacterial outer membrane biogenesis; lipopolysaccharide biosynthesis. This is 2-dehydro-3-deoxyphosphooctonate aldolase from Prochlorococcus marinus (strain MIT 9313).